The chain runs to 187 residues: Keratin-associated protein 5-8 (187 aa).

A run of 9 repeats spans residues 28–31 (CCVP), 34–37 (CCKP), 40–43 (CCVP), 109–112 (CCKP), 119–122 (CCKP), 138–141 (CCKP), 148–151 (CCKP), 167–170 (CCKP), and 177–180 (CCVP). The segment at 28–180 (CCVPICCCKP…CCSQSSCCVP (153 aa)) is 9 X 4 AA repeats of C-C-X-P.

This sequence belongs to the KRTAP type 5 family. Restricted to hair root, not detected in any other tissues. Expressed in cuticle layers of differentiating hair follicles.

In terms of biological role, in the hair cortex, hair keratin intermediate filaments are embedded in an interfilamentous matrix, consisting of hair keratin-associated protein (KRTAP), which are essential for the formation of a rigid and resistant hair shaft through their extensive disulfide bond cross-linking with abundant cysteine residues of hair keratins. The matrix proteins include the high-sulfur and high-glycine-tyrosine keratins. This chain is Keratin-associated protein 5-8 (KRTAP5-8), found in Homo sapiens (Human).